The primary structure comprises 144 residues: Large ribosomal subunit protein uL11 (144 aa).

Belongs to the universal ribosomal protein uL11 family. In terms of assembly, part of the ribosomal stalk of the 50S ribosomal subunit. Interacts with L10 and the large rRNA to form the base of the stalk. L10 forms an elongated spine to which L12 dimers bind in a sequential fashion forming a multimeric L10(L12)X complex. In terms of processing, one or more lysine residues are methylated.

Functionally, forms part of the ribosomal stalk which helps the ribosome interact with GTP-bound translation factors. This chain is Large ribosomal subunit protein uL11, found in Saccharopolyspora erythraea (strain ATCC 11635 / DSM 40517 / JCM 4748 / NBRC 13426 / NCIMB 8594 / NRRL 2338).